Consider the following 316-residue polypeptide: Ornithine carbamoyltransferase (316 aa).

Carbamoyl phosphate contacts are provided by residues 57–60, Gln-84, Arg-108, and 135–138; these read STRT and HPCQ. Residues Asn-166, Asp-230, and 234–235 contribute to the L-ornithine site; that span reads SM. Residues 269-270 and Arg-297 each bind carbamoyl phosphate; that span reads CL.

It belongs to the aspartate/ornithine carbamoyltransferase superfamily. OTCase family.

It is found in the cytoplasm. The enzyme catalyses carbamoyl phosphate + L-ornithine = L-citrulline + phosphate + H(+). The protein operates within amino-acid biosynthesis; L-arginine biosynthesis; L-arginine from L-ornithine and carbamoyl phosphate: step 1/3. In terms of biological role, reversibly catalyzes the transfer of the carbamoyl group from carbamoyl phosphate (CP) to the N(epsilon) atom of ornithine (ORN) to produce L-citrulline. The sequence is that of Ornithine carbamoyltransferase (argF) from Bacillus cereus (strain ATCC 14579 / DSM 31 / CCUG 7414 / JCM 2152 / NBRC 15305 / NCIMB 9373 / NCTC 2599 / NRRL B-3711).